We begin with the raw amino-acid sequence, 473 residues long: Poly(A) polymerase catalytic subunit (473 aa).

Catalysis depends on residues Asp-193 and Asp-195.

This sequence belongs to the poxviridae poly(A) polymerase catalytic subunit family. As to quaternary structure, heterodimer of a large (catalytic) subunit and a small (regulatory) subunit.

It carries out the reaction RNA(n) + ATP = RNA(n)-3'-adenine ribonucleotide + diphosphate. Functionally, polymerase that creates the 3'-poly(A) tail of mRNA's. The polypeptide is Poly(A) polymerase catalytic subunit (PAPL) (Crocodylus johnstoni (Australian freshwater crocodile)).